The following is a 292-amino-acid chain: Glycine--tRNA ligase alpha subunit (292 aa).

The protein belongs to the class-II aminoacyl-tRNA synthetase family. As to quaternary structure, tetramer of two alpha and two beta subunits.

It is found in the cytoplasm. It carries out the reaction tRNA(Gly) + glycine + ATP = glycyl-tRNA(Gly) + AMP + diphosphate. The polypeptide is Glycine--tRNA ligase alpha subunit (Syntrophus aciditrophicus (strain SB)).